Reading from the N-terminus, the 356-residue chain is MEDAAAAARRMERLASHLRPPASQMEESPLLRGSNCRAKGAAPGFKVAILGASGGIGQPLALLMKMNPLVSVLHLYDVVNTPGVTADISHMNTGAVVRGFLGQPQLENALTGMDLVIIPAGVPRKPGMTRDDLFNINAGIVRTLCEGIAKCCPNAIVNVISNPVNSTVPIAAEVFKKAGTYDPKRLLGVTTLDVVRANTFVAEVLGLDPRDVNVPVIGGHAGVTILPLLSQVNPPCSFTSEEISYLTTRIQNGGTEVVEAKAGAGSATLSMAYAASKFADACLRGLRGDAGIVECSFVASQVTELPFFASKVRLGRCGIEEILSLGPLNEFERAGLEKAKKELAESIQKGVAFINK.

The N-terminal 36 residues, 1–36 (MEDAAAAARRMERLASHLRPPASQMEESPLLRGSNC), are a transit peptide targeting the glyoxysome. NAD(+)-binding positions include 51–57 (GASGGIG) and Asp77. Residues Arg124 and Arg130 each contribute to the substrate site. Residues Asn137 and 160 to 162 (ISN) each bind NAD(+). Substrate is bound by residues Asn162 and Arg196. Catalysis depends on His220, which acts as the Proton acceptor. Residue Met271 participates in NAD(+) binding.

This sequence belongs to the LDH/MDH superfamily. MDH type 1 family. As to quaternary structure, homodimer.

Its subcellular location is the glyoxysome. The enzyme catalyses (S)-malate + NAD(+) = oxaloacetate + NADH + H(+). In Oryza sativa subsp. japonica (Rice), this protein is Malate dehydrogenase, glyoxysomal.